A 524-amino-acid chain; its full sequence is Bifunctional purine biosynthesis protein PurH (524 aa).

Positions 1 to 154 (MTRLALLSTS…KNHAHVTVLC (154 aa)) constitute an MGS-like domain.

This sequence belongs to the PurH family.

The enzyme catalyses (6R)-10-formyltetrahydrofolate + 5-amino-1-(5-phospho-beta-D-ribosyl)imidazole-4-carboxamide = 5-formamido-1-(5-phospho-D-ribosyl)imidazole-4-carboxamide + (6S)-5,6,7,8-tetrahydrofolate. It catalyses the reaction IMP + H2O = 5-formamido-1-(5-phospho-D-ribosyl)imidazole-4-carboxamide. The protein operates within purine metabolism; IMP biosynthesis via de novo pathway; 5-formamido-1-(5-phospho-D-ribosyl)imidazole-4-carboxamide from 5-amino-1-(5-phospho-D-ribosyl)imidazole-4-carboxamide (10-formyl THF route): step 1/1. It functions in the pathway purine metabolism; IMP biosynthesis via de novo pathway; IMP from 5-formamido-1-(5-phospho-D-ribosyl)imidazole-4-carboxamide: step 1/1. The polypeptide is Bifunctional purine biosynthesis protein PurH (Acaryochloris marina (strain MBIC 11017)).